The chain runs to 151 residues: Globin CTT-VIII (151 aa).

A Globin domain is found at 4–148 (PMSADQLALF…MFFYILHALE (145 aa)). Heme b-binding residues include His-62 and His-97.

The protein belongs to the globin family. As to quaternary structure, homodimer.

In Chironomus thummi thummi (Midge), this protein is Globin CTT-VIII (CTT-8).